We begin with the raw amino-acid sequence, 874 residues long: Dynein regulatory complex subunit 7 (874 aa).

Coiled-coil stretches lie at residues 1 to 67 (MEVL…SAEL) and 257 to 297 (RFEQ…DALH). Acidic residues predominate over residues 386–400 (TEEDDSGINDEDDVE). Residues 386–410 (TEEDDSGINDEDDVENLGKEDEDKS) form a disordered region. The span at 401 to 410 (NLGKEDEDKS) shows a compositional bias: basic and acidic residues. Coiled-coil stretches lie at residues 688–711 (QVWESELEVLEILKLREEEEAAHT) and 781–807 (KQRLINKANLIQARFEKETQELQKKQQ).

This sequence belongs to the DRC7 family. In terms of assembly, component of the nexin-dynein regulatory complex (N-DRC). Interacts with TCTE1/DRC5. Interacts with DRC3 and GAS8/DRC4.

The protein localises to the cell projection. The protein resides in the cilium. It localises to the flagellum. It is found in the cytoplasm. Its subcellular location is the cytoskeleton. The protein localises to the cilium axoneme. The protein resides in the flagellum axoneme. Component of the nexin-dynein regulatory complex (N-DRC) a key regulator of ciliary/flagellar motility which maintains the alignment and integrity of the distal axoneme and regulates microtubule sliding in motile axonemes. Involved in the regulation of flagellar motility. Essential for male fertility, sperm head morphogenesis and sperm flagellum formation. This chain is Dynein regulatory complex subunit 7 (DRC7), found in Homo sapiens (Human).